Reading from the N-terminus, the 88-residue chain is Small ribosomal subunit protein bS20 (88 aa).

The disordered stretch occupies residues 1–27 (MANSKSAKKRALQSEKRRQHNASRRSM).

Belongs to the bacterial ribosomal protein bS20 family.

In terms of biological role, binds directly to 16S ribosomal RNA. In Shewanella oneidensis (strain ATCC 700550 / JCM 31522 / CIP 106686 / LMG 19005 / NCIMB 14063 / MR-1), this protein is Small ribosomal subunit protein bS20.